Here is a 149-residue protein sequence, read N- to C-terminus: Ribonuclease HI (149 aa).

In terms of domain architecture, RNase H type-1 spans 1-140 (MIIGYFDGLC…AYELVRRGKL (140 aa)). Asp-7, Glu-52, Asp-76, and Asp-125 together coordinate Mg(2+). Residues Asp-7, Glu-52, Asp-76, and Asp-125 each coordinate Mn(2+). A disulfide bond links Cys-58 and Cys-145.

As to quaternary structure, monomer. Mn(2+) serves as cofactor. The cofactor is Mg(2+). Requires Co(2+) as cofactor. It depends on Ni(2+) as a cofactor. In terms of processing, the disulfide bond confers considerable stability to the protein.

The protein resides in the cytoplasm. The catalysed reaction is Endonucleolytic cleavage to 5'-phosphomonoester.. Its function is as follows. Nuclease that specifically degrades the RNA of RNA-DNA hybrids. Endonucleolytically removes RNA primers from the Okazaki fragments of lagging strand synthesis on its own. In the presence of Mn(2+) or Co(2+) can also cleave an RNA-RNA hybrid; the dsRNase activity is 10- 100-fold lower than RNase H activity. Complements the temperature-sensitive phenotype of an E.coli double rnhA/rnhB (RNase H) disruption mutant. The chain is Ribonuclease HI (rnhA) from Sulfurisphaera tokodaii (strain DSM 16993 / JCM 10545 / NBRC 100140 / 7) (Sulfolobus tokodaii).